Reading from the N-terminus, the 486-residue chain is Pup--protein ligase (486 aa).

Glu-33 provides a ligand contact to Mg(2+). ATP is bound at residue Arg-76. Residue Tyr-78 participates in Mg(2+) binding. Asp-80 serves as the catalytic Proton acceptor. Glu-86 is a binding site for Mg(2+). Residues Thr-89 and Trp-451 each contribute to the ATP site.

The protein belongs to the Pup ligase/Pup deamidase family. Pup-conjugating enzyme subfamily.

The enzyme catalyses ATP + [prokaryotic ubiquitin-like protein]-L-glutamate + [protein]-L-lysine = ADP + phosphate + N(6)-([prokaryotic ubiquitin-like protein]-gamma-L-glutamyl)-[protein]-L-lysine.. It participates in protein degradation; proteasomal Pup-dependent pathway. The protein operates within protein modification; protein pupylation. In terms of biological role, catalyzes the covalent attachment of the prokaryotic ubiquitin-like protein modifier Pup to the proteasomal substrate proteins, thereby targeting them for proteasomal degradation. This tagging system is termed pupylation. The ligation reaction involves the side-chain carboxylate of the C-terminal glutamate of Pup and the side-chain amino group of a substrate lysine. The protein is Pup--protein ligase of Bifidobacterium longum (strain DJO10A).